The sequence spans 418 residues: Gamma-glutamyl phosphate reductase (418 aa).

The protein belongs to the gamma-glutamyl phosphate reductase family.

It is found in the cytoplasm. The catalysed reaction is L-glutamate 5-semialdehyde + phosphate + NADP(+) = L-glutamyl 5-phosphate + NADPH + H(+). It functions in the pathway amino-acid biosynthesis; L-proline biosynthesis; L-glutamate 5-semialdehyde from L-glutamate: step 2/2. Catalyzes the NADPH-dependent reduction of L-glutamate 5-phosphate into L-glutamate 5-semialdehyde and phosphate. The product spontaneously undergoes cyclization to form 1-pyrroline-5-carboxylate. The protein is Gamma-glutamyl phosphate reductase of Pelodictyon phaeoclathratiforme (strain DSM 5477 / BU-1).